A 2849-amino-acid chain; its full sequence is Immunoglobulin-like and fibronectin type III domain-containing protein 1 (2849 aa).

Residues 82-108 (AGSAARPDGSGSESLAASSSWKPRRRL) form a disordered region. Positions 90–101 (GSGSESLAASSS) are enriched in low complexity. Residues 187–277 (PDFKQKPVTL…GEATCSVRLT (91 aa)) form the Ig-like 1 domain. Residues 347–380 (IVDFRGMLRKLQEMKKEQEDRMAQYVSAIANLRH) adopt a coiled-coil conformation. The Ig-like 2 domain maps to 468–557 (PRVVVPLAET…SSAWLVVEGG (90 aa)). 12 disordered regions span residues 577–600 (LASE…RGSL), 652–760 (VTLP…AGQR), 864–924 (YPGQ…DLRS), 962–981 (VGQR…IGPQ), 1061–1103 (EEEF…EGMA), 1221–1258 (TVGS…SSWG), 1312–1338 (STVG…SEGH), 1350–1384 (RDGS…PDGE), 1498–1523 (ETGR…MGSE), 1654–1675 (EWKD…SEEI), 1724–1780 (QQGV…ATSH), and 1827–2055 (GAAG…SMDH). The segment covering 717–742 (HPRDRRLESRGEGQEHSEGHGSELDR) has biased composition (basic and acidic residues). Positions 866–880 (GQTSEGNDTQKSSLS) are enriched in polar residues. Over residues 1070-1084 (RSQGKGSRGGMGLGG) the composition is skewed to gly residues. Residues 1873-1882 (SKPQEPQNEL) show a composition bias toward polar residues. Basic and acidic residues-rich tracts occupy residues 1988 to 2004 (SEDR…DRRQ) and 2012 to 2021 (SRRDTQEGRS). An Ig-like 3 domain is found at 2034–2137 (PRSRYQPGTG…GCQHSEASLT (104 aa)). 3 Fibronectin type-III domains span residues 2244 to 2339 (PPQG…VAPE), 2344 to 2443 (PPSA…MRPP), and 2445 to 2540 (PVRD…AMPA). An Ig-like 4 domain is found at 2544 to 2628 (PRFLMDSGTK…LRNLQGKEAT (85 aa)). One can recognise a Fibronectin type-III 4 domain in the interval 2641–2735 (APGSIYLQEN…TSQPWCIPRQ (95 aa)). The Ig-like 5 domain occupies 2749–2845 (PDLSQKPRFL…AVSTATLIVT (97 aa)).

As to quaternary structure, interacts with FLNC. Interacts with KY. Isoform 1, isoform 3 and isoform 4 are expressed in skeletal muscle while isoform 2 is detected in both skeletal muscle and heart (at protein level).

The protein resides in the nucleus. Its subcellular location is the cytoplasm. It is found in the myofibril. The protein localises to the sarcomere. It localises to the z line. This chain is Immunoglobulin-like and fibronectin type III domain-containing protein 1 (Igfn1), found in Mus musculus (Mouse).